The following is an 829-amino-acid chain: Probable beta-glucosidase H (829 aa).

The N-linked (GlcNAc...) asparagine glycan is linked to Asn13. The active site involves Asp225. N-linked (GlcNAc...) asparagine glycosylation is found at Asn304, Asn473, Asn602, Asn627, and Asn664. Positions 389 to 548 (RMLSNAVIHF…DPEQMVANAV (160 aa)) constitute a PA14 domain.

Belongs to the glycosyl hydrolase 3 family.

The protein resides in the secreted. It carries out the reaction Hydrolysis of terminal, non-reducing beta-D-glucosyl residues with release of beta-D-glucose.. It participates in glycan metabolism; cellulose degradation. Functionally, beta-glucosidases are one of a number of cellulolytic enzymes involved in the degradation of cellulosic biomass. Catalyzes the last step releasing glucose from the inhibitory cellobiose. This is Probable beta-glucosidase H (bglH) from Neosartorya fischeri (strain ATCC 1020 / DSM 3700 / CBS 544.65 / FGSC A1164 / JCM 1740 / NRRL 181 / WB 181) (Aspergillus fischerianus).